Here is a 53-residue protein sequence, read N- to C-terminus: MIFNSLINIINKSSPSSLNNNNNINSKSLQINSENKSKIQNNNPLGNKGGVQF.

Residues 14 to 33 (SPSSLNNNNNINSKSLQINS) are compositionally biased toward low complexity. Residues 14–53 (SPSSLNNNNNINSKSLQINSENKSKIQNNNPLGNKGGVQF) form a disordered region.

This is an uncharacterized protein from Dictyostelium discoideum (Social amoeba).